A 309-amino-acid polypeptide reads, in one-letter code: MSTLLDVRVAAIRELTPVIREYSFEALASTLPGFSAGSHVQLHLPNGRRNAYSLLSDPADTRQYRIAVRQQDASRGGSRYLHQHLKVGDRLRLSPPANLFPLHGEAQKHILVAAGIGITPFLAYSQELLRRGADFELHYAYRAGSSDAYVDELRQQLGPRLHEYLSGQRRLDLASLLQGRTLGTHVYACGPQSLLLDLQEQASAQGWSPRRVHWEAFAAAEPGQPFRVELARSGQQLEVAADESLLEALEAAGVEVPNLCRGGVCGQCQTPWLKGDVEHRDHFLSANERTSSLMPCVSRGCGSPILLDL.

The region spanning 2–103 (STLLDVRVAA…SPPANLFPLH (102 aa)) is the FAD-binding FR-type domain. In terms of domain architecture, 2Fe-2S ferredoxin-type spans 226 to 309 (FRVELARSGQ…GCGSPILLDL (84 aa)). The [2Fe-2S] cluster site is built by cysteine 260, cysteine 265, cysteine 268, and cysteine 296.

Belongs to the PDR/VanB family. As to quaternary structure, the heme-dependent oxidative N-demethylase (HODM) is a heterotetramer composed of a catalytic alpha subunit, a FMN/2Fe-2S-dependent oxidoreductase beta subunit, a gamma subunit with putative aminotransferase activity, and a delta subunit of unknown function. [2Fe-2S] cluster serves as cofactor. FMN is required as a cofactor.

Functionally, component of the heme-dependent oxidative N-demethylase (HODM) enzyme, that catalyzes the NADPH-dependent oxidation of dimethylamine (DMA) to methylamine (MA) and formaldehyde. Functions in bacterial methylated amine catabolism, linking alkylamine oxidation to the tetrahydrofolate C1 pool. The beta subunit of HODM binds FMN and a 2Fe-2S cluster, and likely reduces the ferric heme iron of the alpha subunit to ferrous using NADPH. The sequence is that of Heme-dependent oxidative N-demethylase beta subunit from Ectopseudomonas mendocina (strain ymp) (Pseudomonas mendocina).